The primary structure comprises 283 residues: Undecaprenyl-diphosphatase (283 aa).

7 consecutive transmembrane segments (helical) span residues 46–66, 95–115, 127–147, 154–174, 200–220, 227–247, and 259–279; these read PGVS…IAYF, VAMV…KFFW, VPSI…AECM, LGGV…LAVI, FSFL…LKSA, AGPL…WLAI, and TWIF…WWAF.

This sequence belongs to the UppP family.

It is found in the cell inner membrane. The catalysed reaction is di-trans,octa-cis-undecaprenyl diphosphate + H2O = di-trans,octa-cis-undecaprenyl phosphate + phosphate + H(+). Catalyzes the dephosphorylation of undecaprenyl diphosphate (UPP). Confers resistance to bacitracin. This chain is Undecaprenyl-diphosphatase, found in Synechococcus sp. (strain CC9902).